The chain runs to 205 residues: Thiamine-phosphate synthase (205 aa).

4-amino-2-methyl-5-(diphosphooxymethyl)pyrimidine contacts are provided by residues Gln-37–Lys-41 and Asn-69. Positions 70 and 89 each coordinate Mg(2+). Ser-108 lines the 4-amino-2-methyl-5-(diphosphooxymethyl)pyrimidine pocket. Thr-134–Ser-136 provides a ligand contact to 2-[(2R,5Z)-2-carboxy-4-methylthiazol-5(2H)-ylidene]ethyl phosphate. Position 137 (Lys-137) interacts with 4-amino-2-methyl-5-(diphosphooxymethyl)pyrimidine. Residues Gly-165 and Ile-185–Ser-186 contribute to the 2-[(2R,5Z)-2-carboxy-4-methylthiazol-5(2H)-ylidene]ethyl phosphate site.

It belongs to the thiamine-phosphate synthase family. Requires Mg(2+) as cofactor.

It catalyses the reaction 2-[(2R,5Z)-2-carboxy-4-methylthiazol-5(2H)-ylidene]ethyl phosphate + 4-amino-2-methyl-5-(diphosphooxymethyl)pyrimidine + 2 H(+) = thiamine phosphate + CO2 + diphosphate. The catalysed reaction is 2-(2-carboxy-4-methylthiazol-5-yl)ethyl phosphate + 4-amino-2-methyl-5-(diphosphooxymethyl)pyrimidine + 2 H(+) = thiamine phosphate + CO2 + diphosphate. The enzyme catalyses 4-methyl-5-(2-phosphooxyethyl)-thiazole + 4-amino-2-methyl-5-(diphosphooxymethyl)pyrimidine + H(+) = thiamine phosphate + diphosphate. Its pathway is cofactor biosynthesis; thiamine diphosphate biosynthesis; thiamine phosphate from 4-amino-2-methyl-5-diphosphomethylpyrimidine and 4-methyl-5-(2-phosphoethyl)-thiazole: step 1/1. Functionally, condenses 4-methyl-5-(beta-hydroxyethyl)thiazole monophosphate (THZ-P) and 2-methyl-4-amino-5-hydroxymethyl pyrimidine pyrophosphate (HMP-PP) to form thiamine monophosphate (TMP). This is Thiamine-phosphate synthase from Clostridium botulinum (strain Langeland / NCTC 10281 / Type F).